A 281-amino-acid polypeptide reads, in one-letter code: NAD-dependent protein deacetylase 1 (281 aa).

Positions M1–L281 constitute a Deacetylase sirtuin-type domain. NAD(+)-binding positions include G24 to N44 and Q102 to D105. Catalysis depends on H120, which acts as the Proton acceptor. 4 residues coordinate Zn(2+): C128, C131, C183, and C186. NAD(+) is bound by residues G224–S226, N250–G252, and V268.

The protein belongs to the sirtuin family. Class II subfamily. Zn(2+) is required as a cofactor.

The protein localises to the cytoplasm. The enzyme catalyses N(6)-acetyl-L-lysyl-[protein] + NAD(+) + H2O = 2''-O-acetyl-ADP-D-ribose + nicotinamide + L-lysyl-[protein]. Its function is as follows. NAD-dependent protein deacetylase which modulates the activities of several enzymes which are inactive in their acetylated form. The polypeptide is NAD-dependent protein deacetylase 1 (Corynebacterium efficiens (strain DSM 44549 / YS-314 / AJ 12310 / JCM 11189 / NBRC 100395)).